The following is a 79-amino-acid chain: CDC42 small effector protein 1-B (79 aa).

Residues Cys10 and Cys11 are each lipidated (S-palmitoyl cysteine). Residues 30–43 (IGEPMNFVHLTHIG) form the CRIB domain. The segment at 41 to 79 (HIGSGDMGASDGLPKAGTVQEQMRSKCGRDRQWSNSRVL) is disordered. Over residues 63–72 (MRSKCGRDRQ) the composition is skewed to basic and acidic residues.

Belongs to the CDC42SE/SPEC family.

Its subcellular location is the cytoplasm. It is found in the cytoskeleton. The protein resides in the cell membrane. Probably involved in the organization of the actin cytoskeleton by acting downstream of CDC42, inducing actin filament assembly. The protein is CDC42 small effector protein 1-B (cdc42se1-b) of Xenopus laevis (African clawed frog).